A 353-amino-acid chain; its full sequence is Phospho-N-acetylmuramoyl-pentapeptide-transferase (353 aa).

Helical transmembrane passes span 22 to 42 (FAFF…ITWA), 65 to 85 (TPTM…LFCI), 88 to 108 (DNIF…IGLI), 129 to 149 (LLAQ…SSEL), 161 to 181 (PLFD…ISSS), 192 to 212 (GLAT…LYLS), 228 to 248 (GLGE…GFLW), 256 to 276 (VFMG…LAII), 281 to 301 (ILLL…ILQV), and 330 to 350 (KIIV…LASI).

It belongs to the glycosyltransferase 4 family. MraY subfamily. Mg(2+) is required as a cofactor.

The protein resides in the cell inner membrane. It catalyses the reaction UDP-N-acetyl-alpha-D-muramoyl-L-alanyl-gamma-D-glutamyl-meso-2,6-diaminopimeloyl-D-alanyl-D-alanine + di-trans,octa-cis-undecaprenyl phosphate = di-trans,octa-cis-undecaprenyl diphospho-N-acetyl-alpha-D-muramoyl-L-alanyl-D-glutamyl-meso-2,6-diaminopimeloyl-D-alanyl-D-alanine + UMP. Its pathway is cell wall biogenesis; peptidoglycan biosynthesis. In terms of biological role, catalyzes the initial step of the lipid cycle reactions in the biosynthesis of the cell wall peptidoglycan: transfers peptidoglycan precursor phospho-MurNAc-pentapeptide from UDP-MurNAc-pentapeptide onto the lipid carrier undecaprenyl phosphate, yielding undecaprenyl-pyrophosphoryl-MurNAc-pentapeptide, known as lipid I. The protein is Phospho-N-acetylmuramoyl-pentapeptide-transferase of Campylobacter jejuni subsp. jejuni serotype O:6 (strain 81116 / NCTC 11828).